The primary structure comprises 336 residues: MNTPKPQIAITMGDPCGVGPEIIVAALSDPAIRSACKPLVLGDRRAMQRALTVCNSPLELITVSSPAEAADLPDSVIPLLELSSLANTDIDYGKPSELSGDAVYRYIRRAAELCLTGEVAAMATAPISKEAMHRAGHHYPGHTELLAELCRCDEFVMMLAGDVLRVALVTIHEALAHVPALISTEQVLKTIRVTANGVAPLCGNRSPRIAVLALNPHCGEGGMFGSEEADAIIPAITAAQSEGLDVAGPFSADTFFHFAVQEPAPYDAVVAMYHDQGLIPLKMRHFDDGINITLGLPIIRTSVDHGTAYNLAGTGTASATSMKASIRIAAKLAATR.

His142 and Thr143 together coordinate substrate. Residues His172, His217, and His274 each coordinate a divalent metal cation. 3 residues coordinate substrate: Lys282, Asn291, and Arg300.

This sequence belongs to the PdxA family. In terms of assembly, homodimer. Requires Zn(2+) as cofactor. It depends on Mg(2+) as a cofactor. Co(2+) serves as cofactor.

The protein localises to the cytoplasm. The enzyme catalyses 4-(phosphooxy)-L-threonine + NAD(+) = 3-amino-2-oxopropyl phosphate + CO2 + NADH. Its pathway is cofactor biosynthesis; pyridoxine 5'-phosphate biosynthesis; pyridoxine 5'-phosphate from D-erythrose 4-phosphate: step 4/5. Its function is as follows. Catalyzes the NAD(P)-dependent oxidation of 4-(phosphooxy)-L-threonine (HTP) into 2-amino-3-oxo-4-(phosphooxy)butyric acid which spontaneously decarboxylates to form 3-amino-2-oxopropyl phosphate (AHAP). This chain is 4-hydroxythreonine-4-phosphate dehydrogenase, found in Trichlorobacter lovleyi (strain ATCC BAA-1151 / DSM 17278 / SZ) (Geobacter lovleyi).